The following is a 148-amino-acid chain: UPF0260 protein Maqu_1608 (148 aa).

This sequence belongs to the UPF0260 family.

The protein is UPF0260 protein Maqu_1608 of Marinobacter nauticus (strain ATCC 700491 / DSM 11845 / VT8) (Marinobacter aquaeolei).